The chain runs to 269 residues: Cbp/p300-interacting transactivator 2 (269 aa).

Positions 142–200 (AGHQMNGTNQHFRDCNPKHSGGSSTPGGAGGSGTPGGSGGTSGGAGGSSAGGSGGGSTM) are disordered. Positions 165–198 (STPGGAGGSGTPGGSGGTSGGAGGSSAGGSGGGS) are enriched in gly residues.

Belongs to the CITED family. In terms of assembly, interacts (via C-terminus) with EP300 (via CH1 domain); the interaction is stimulated in response to hypoxia. Interacts with PPARA. Interacts (via C-terminus) with TFAP2A, TFAP2B and TFAP2C. Interacts (via C-terminus) with SMAD2. Interacts (via C-terminus) with SMAD3 (via MH2 domain). Interacts with LHX2 (via LIM domains). Interacts with WT1 isoform 1 and isoform 3. As to expression, ubiquitous.

The protein resides in the nucleus. In terms of biological role, transcriptional coactivator of the p300/CBP-mediated transcription complex. Acts as a bridge, linking TFAP2 transcription factors and the p300/CBP transcriptional coactivator complex in order to stimulate TFAP2-mediated transcriptional activation. Positively regulates TGF-beta signaling through its association with the SMAD/p300/CBP-mediated transcriptional coactivator complex. Stimulates the peroxisome proliferator-activated receptors PPARA transcriptional activity. Enhances estrogen-dependent transactivation mediated by estrogen receptors. Also acts as a transcriptional corepressor; interferes with the binding of the transcription factors HIF1A or STAT2 and the p300/CBP transcriptional coactivator complex. Participates in sex determination and early gonad development by stimulating transcription activation of SRY. Plays a role in controlling left-right patterning during embryogenesis; potentiates transcriptional activation of NODAL-mediated gene transcription in the left lateral plate mesoderm (LPM). Plays an essential role in differentiation of the adrenal cortex from the adrenogonadal primordium (AGP); stimulates WT1-mediated transcription activation thereby up-regulating the nuclear hormone receptor NR5A1 promoter activity. Associates with chromatin to the PITX2 P1 promoter region. This Mus musculus (Mouse) protein is Cbp/p300-interacting transactivator 2 (Cited2).